The following is a 259-amino-acid chain: Phosphate import ATP-binding protein PstB (259 aa).

Residues 13–254 form the ABC transporter domain; that stretch reads IAVKNLNFFY…PTRKETEDYI (242 aa). 45-52 is an ATP binding site; it reads GPSGCGKS.

The protein belongs to the ABC transporter superfamily. Phosphate importer (TC 3.A.1.7) family. As to quaternary structure, the complex is composed of two ATP-binding proteins (PstB), two transmembrane proteins (PstC and PstA) and a solute-binding protein (PstS).

The protein resides in the cell inner membrane. The enzyme catalyses phosphate(out) + ATP + H2O = ADP + 2 phosphate(in) + H(+). Its function is as follows. Part of the ABC transporter complex PstSACB involved in phosphate import. Responsible for energy coupling to the transport system. The sequence is that of Phosphate import ATP-binding protein PstB from Albidiferax ferrireducens (strain ATCC BAA-621 / DSM 15236 / T118) (Rhodoferax ferrireducens).